An 85-amino-acid polypeptide reads, in one-letter code: Makatoxin-2 (85 aa).

Residues 1–19 (MNYLIVISFALLLMTSVES) form the signal peptide. The LCN-type CS-alpha/beta domain occupies 21–83 (RDAYIADSEN…VPIRIPGPCR (63 aa)). Disulfide bonds link Cys-31-Cys-82, Cys-35-Cys-55, Cys-41-Cys-65, and Cys-45-Cys-67.

It belongs to the long (4 C-C) scorpion toxin superfamily. Sodium channel inhibitor family. Alpha subfamily. Expressed by the venom gland.

It localises to the secreted. In terms of biological role, this protein markedly relaxes the rat carbachol-precontracted anococcygeus muscle. This relaxation is inhibited by the inhibitor of nitric oxide (NO) synthase, N-nitro-L-arginine methyl ester (L-NAME), suggesting that the response induced by this protein is NO-mediated. The sequence is that of Makatoxin-2 from Olivierus martensii (Manchurian scorpion).